The following is a 408-amino-acid chain: MLHPKLGRVMNVVYYHSVVFALMSTTLRIRSCRKCLRLEKVSRTYTIYSFFVGIFLFLNLYFMVPRIMEDGYMKYNIVLQWNFFVMLFLRAIAVVSCYGTLWLKRHKIIQLYKYSLIYWKRFGHITRAIVDKKELLDLQESLARIMIRKIILLYSAFLCSTVLQYQLLSVINPQIFLAFCARLTHFLHFLCVKMGFFGVLVLLNHQFLVIHLAINALHGRKARKKWKALRSVAAMHLKTLRLARRIFDMFDIANATVFINMFMTAINILYHAVQYSNSSIKSNGWGILFGNGLIVFNFWGTMALMEMLDSVVTSCNNTGQQLRQLSDLPKVGPKMQRELDVFTMQLRQNRLVYKICGIVELDKPACLSYIGSILSNVIILMQFDLRRQRQPINDRQYLIHLMKNKTKV.

At 1–44 (MLHPKLGRVMNVVYYHSVVFALMSTTLRIRSCRKCLRLEKVSRT) the chain is on the cytoplasmic side. Residues 45-65 (YTIYSFFVGIFLFLNLYFMVP) form a helical membrane-spanning segment. At 66 to 82 (RIMEDGYMKYNIVLQWN) the chain is on the extracellular side. A helical transmembrane segment spans residues 83–103 (FFVMLFLRAIAVVSCYGTLWL). At 104-150 (KRHKIIQLYKYSLIYWKRFGHITRAIVDKKELLDLQESLARIMIRKI) the chain is on the cytoplasmic side. The helical transmembrane segment at 151–171 (ILLYSAFLCSTVLQYQLLSVI) threads the bilayer. The Extracellular portion of the chain corresponds to 172 to 193 (NPQIFLAFCARLTHFLHFLCVK). The chain crosses the membrane as a helical span at residues 194 to 214 (MGFFGVLVLLNHQFLVIHLAI). Over 215–245 (NALHGRKARKKWKALRSVAAMHLKTLRLARR) the chain is Cytoplasmic. Residues 246 to 266 (IFDMFDIANATVFINMFMTAI) form a helical membrane-spanning segment. Residues 267–284 (NILYHAVQYSNSSIKSNG) are Extracellular-facing. Asn277 carries an N-linked (GlcNAc...) asparagine glycan. Residues 285–305 (WGILFGNGLIVFNFWGTMALM) traverse the membrane as a helical segment. The Cytoplasmic segment spans residues 306–364 (EMLDSVVTSCNNTGQQLRQLSDLPKVGPKMQRELDVFTMQLRQNRLVYKICGIVELDKP). The chain crosses the membrane as a helical span at residues 365–385 (ACLSYIGSILSNVIILMQFDL). Residues 386-408 (RRQRQPINDRQYLIHLMKNKTKV) are Extracellular-facing. N-linked (GlcNAc...) asparagine glycosylation is present at Asn404.

The protein belongs to the insect chemoreceptor superfamily. Gustatory receptor (GR) family. Gr22e subfamily. Expressed in the adult labellar chemosensory neurons, labral sense organ and thorax. In larvae, is in neurons of the terminal external chemosensory organ as well as in the dorsal pharyngeal sense organ.

The protein localises to the cell membrane. Its function is as follows. Probable gustatory receptor which mediates acceptance or avoidance behavior, depending on its substrates. The protein is Putative gustatory receptor 58b (Gr58b) of Drosophila melanogaster (Fruit fly).